We begin with the raw amino-acid sequence, 125 residues long: uncharacterized protein (125 aa).

Belongs to the asfivirus B125R family.

This is an uncharacterized protein from African swine fever virus (isolate Pig/Kenya/KEN-50/1950) (ASFV).